Consider the following 132-residue polypeptide: Replication enhancer protein (132 aa).

It belongs to the geminiviridae replication enhancer protein family. As to quaternary structure, homooligomer. Interacts with the replication-associated protein (REP). Interacts with host proliferating cell nuclear antigen (PCNA). Interacts with host retinoblastoma-related protein 1 (RBR1), and may thereby deregulate the host cell cycle. Oligomerization and interaction with PCNA are necessary for optimal replication enhancement.

Its function is as follows. Increases viral DNA accumulation. Enhances infectivity and symptom expression. The chain is Replication enhancer protein from Tomato mottle virus (isolate Florida) (ToMoV).